The chain runs to 240 residues: Uridylate kinase (240 aa).

13 to 16 (KFSG) provides a ligand contact to ATP. UMP is bound at residue glycine 55. Glycine 56 and arginine 60 together coordinate ATP. Residues aspartate 76 and 137–144 (TGNPFFTT) each bind UMP. Residues threonine 164, tyrosine 170, and aspartate 173 each contribute to the ATP site.

Belongs to the UMP kinase family. Homohexamer.

It is found in the cytoplasm. The catalysed reaction is UMP + ATP = UDP + ADP. It participates in pyrimidine metabolism; CTP biosynthesis via de novo pathway; UDP from UMP (UMPK route): step 1/1. Inhibited by UTP. Its function is as follows. Catalyzes the reversible phosphorylation of UMP to UDP. The chain is Uridylate kinase from Helicobacter pylori (strain ATCC 700392 / 26695) (Campylobacter pylori).